Reading from the N-terminus, the 297-residue chain is UDP-N-acetylenolpyruvoylglucosamine reductase (297 aa).

In terms of domain architecture, FAD-binding PCMH-type spans 24–189 (KVGGNAEIFF…LKAIFKVNKG (166 aa)). Arginine 169 is an active-site residue. Residue serine 218 is the Proton donor of the active site. The active site involves glutamate 289.

It belongs to the MurB family. FAD is required as a cofactor.

It localises to the cytoplasm. The enzyme catalyses UDP-N-acetyl-alpha-D-muramate + NADP(+) = UDP-N-acetyl-3-O-(1-carboxyvinyl)-alpha-D-glucosamine + NADPH + H(+). The protein operates within cell wall biogenesis; peptidoglycan biosynthesis. Its function is as follows. Cell wall formation. In Rickettsia canadensis (strain McKiel), this protein is UDP-N-acetylenolpyruvoylglucosamine reductase.